The primary structure comprises 688 residues: MIOREX complex component 1 (688 aa).

Residues 1–24 (MGLKITKGQLRTKDLNQSSSKSSQ) are disordered. The transit peptide at 1–46 (MGLKITKGQLRTKDLNQSSSKSSQSSRIGVDTCIFTRMLPRINTAI) directs the protein to the mitochondrion.

Associates with the mitochondrial ribosome.

It localises to the mitochondrion. Functionally, component of MIOREX complexes, large expressome-like assemblies of ribosomes with factors involved in all the steps of post-transcriptional gene expression. This chain is MIOREX complex component 1, found in Saccharomyces cerevisiae (strain ATCC 204508 / S288c) (Baker's yeast).